A 180-amino-acid polypeptide reads, in one-letter code: Large ribosomal subunit protein uL6 (180 aa).

The protein belongs to the universal ribosomal protein uL6 family. As to quaternary structure, part of the 50S ribosomal subunit.

Its function is as follows. This protein binds to the 23S rRNA, and is important in its secondary structure. It is located near the subunit interface in the base of the L7/L12 stalk, and near the tRNA binding site of the peptidyltransferase center. The polypeptide is Large ribosomal subunit protein uL6 (Anaeromyxobacter sp. (strain Fw109-5)).